A 926-amino-acid polypeptide reads, in one-letter code: Serine/threonine-protein kinase SIK2 (926 aa).

The Protein kinase domain maps to 20–271; sequence YDIEGTLGKG…IAQIKEHKWM (252 aa). Phosphothreonine is present on Thr-25. ATP-binding positions include 26–34 and Lys-49; that span reads LGKGNFAVV. Lys-53 carries the post-translational modification N6-acetyllysine; by EP300. Catalysis depends on Asp-142, which acts as the Proton acceptor. At Thr-175 the chain carries Phosphothreonine; by LKB1. The UBA domain occupies 295-335; that stretch reads EFNEQVLRLMHSLGIDQQKTIESLQNKSYNHFAAIYFLLVE. Phosphothreonine is present on Thr-484. 2 positions are modified to phosphoserine: Ser-534 and Ser-587. Composition is skewed to low complexity over residues 644-659 and 742-756; these read SSCP…ESVS and SSYP…LPRQ. Disordered regions lie at residues 644 to 666, 742 to 776, and 801 to 896; these read SSCP…ASVH, SSYP…PLSP, and PLPS…SSYD. Over residues 765 to 774 the composition is skewed to polar residues; that stretch reads APPFSLTQPL. The span at 822–834 shows a compositional bias: pro residues; sequence QPPPPPPPPPPRQ.

This sequence belongs to the protein kinase superfamily. CAMK Ser/Thr protein kinase family. SNF1 subfamily. In terms of assembly, interacts with and phosphorylates TORC2/CRTC2. Mg(2+) is required as a cofactor. Post-translationally, phosphorylated at Thr-175 by STK11/LKB1 in complex with STE20-related adapter-alpha (STRADA) pseudo kinase and CAB39. Phosphorylated at Thr-484 in response to insulin in adipocytes. In terms of processing, acetylation at Lys-53 inhibits kinase activity. Deacetylated by HDAC6.

It localises to the cytoplasm. It is found in the endoplasmic reticulum membrane. The catalysed reaction is L-seryl-[protein] + ATP = O-phospho-L-seryl-[protein] + ADP + H(+). It carries out the reaction L-threonyl-[protein] + ATP = O-phospho-L-threonyl-[protein] + ADP + H(+). Activated by phosphorylation on Thr-175. Its function is as follows. Serine/threonine-protein kinase that plays a role in many biological processes such as fatty acid oxidation, autophagy, immune response or glucose metabolism. Phosphorylates 'Ser-794' of IRS1 in insulin-stimulated adipocytes, potentially modulating the efficiency of insulin signal transduction. Inhibits CREB activity by phosphorylating and repressing TORCs, the CREB-specific coactivators. Phosphorylates EP300 and thus inhibits its histone acetyltransferase activity. In turn, regulates the DNA-binding ability of several transcription factors such as PPARA or MLXIPL. Also plays a role in thymic T-cell development. The sequence is that of Serine/threonine-protein kinase SIK2 (SIK2) from Homo sapiens (Human).